The primary structure comprises 77 residues: UPF0291 protein RBAM_017680 (77 aa).

A disordered region spans residues 55-77 (IDPEGNDVTPEKLKREQQKNNLH). Over residues 63–77 (TPEKLKREQQKNNLH) the composition is skewed to basic and acidic residues.

The protein belongs to the UPF0291 family.

The protein resides in the cytoplasm. This is UPF0291 protein RBAM_017680 from Bacillus velezensis (strain DSM 23117 / BGSC 10A6 / LMG 26770 / FZB42) (Bacillus amyloliquefaciens subsp. plantarum).